A 348-amino-acid chain; its full sequence is Phospho-2-dehydro-3-deoxyheptonate aldolase, Trp-sensitive (348 aa).

This sequence belongs to the class-I DAHP synthase family.

The enzyme catalyses D-erythrose 4-phosphate + phosphoenolpyruvate + H2O = 7-phospho-2-dehydro-3-deoxy-D-arabino-heptonate + phosphate. Its pathway is metabolic intermediate biosynthesis; chorismate biosynthesis; chorismate from D-erythrose 4-phosphate and phosphoenolpyruvate: step 1/7. Functionally, stereospecific condensation of phosphoenolpyruvate (PEP) and D-erythrose-4-phosphate (E4P) giving rise to 3-deoxy-D-arabino-heptulosonate-7-phosphate (DAHP). This Salmonella typhi protein is Phospho-2-dehydro-3-deoxyheptonate aldolase, Trp-sensitive (aroH).